Here is a 384-residue protein sequence, read N- to C-terminus: ATP phosphoribosyltransferase regulatory subunit (384 aa).

This sequence belongs to the class-II aminoacyl-tRNA synthetase family. HisZ subfamily. As to quaternary structure, heteromultimer composed of HisG and HisZ subunits.

It is found in the cytoplasm. Its pathway is amino-acid biosynthesis; L-histidine biosynthesis; L-histidine from 5-phospho-alpha-D-ribose 1-diphosphate: step 1/9. Required for the first step of histidine biosynthesis. May allow the feedback regulation of ATP phosphoribosyltransferase activity by histidine. The protein is ATP phosphoribosyltransferase regulatory subunit of Azoarcus sp. (strain BH72).